The chain runs to 115 residues: OV39 antigen (115 aa).

The polypeptide is OV39 antigen (OV39) (Onchocerca volvulus).